A 392-amino-acid chain; its full sequence is MYPGSGNYSYNNRPSMPPPGFNGDGQGYRQEYGNQYGGGYQQQQYQDQYQGENRGQYQGQYQDQPEYGRPPSGMVRPPSSIQQGNGQQFQYSQMTGRRKALLIGINYIGSKNALRGCINDAHNIFNYLTTYCGYRPEDIVMLTDDQREMVKIPLKENIIRAMQWLVKDAQPNDALFFHYSGHGGQTKDLDGDEEDGMDDVIYPVDFESVGPLIDDTMHDIMVKSLPQGARLTALFDSCHSGTVLDLPYTYSTKGVIKEPNMWKDVGSDGIQAAMAYATGNRSALFSSIGNMVSSVTKKQNVDRERVRQIKFSPADVIMLSGSKDNQTSADTFADGQNIGAMSHAFISVMTRQPQQSYLSLLQNLRNELAGKYSQKPQLSASHPIDVNLQFIM.

A compositionally biased stretch (polar residues) spans 1–14 (MYPGSGNYSYNNRP). A disordered region spans residues 1-87 (MYPGSGNYSY…PSSIQQGNGQ (87 aa)). The segment covering 41–51 (QQQQYQDQYQG) has biased composition (low complexity). The segment covering 53–63 (NRGQYQGQYQD) has biased composition (polar residues). Residues His182 and Cys238 contribute to the active site.

Belongs to the peptidase C14B family.

Its function is as follows. Involved in cell death (apoptosis). This Candida glabrata (strain ATCC 2001 / BCRC 20586 / JCM 3761 / NBRC 0622 / NRRL Y-65 / CBS 138) (Yeast) protein is Metacaspase-1 (MCA1).